The primary structure comprises 383 residues: Protein phosphatase 2C homolog 4 (383 aa).

The 306-residue stretch at 51-356 (SLGLCTARGD…DDITCLVVRL (306 aa)) folds into the PPM-type phosphatase domain. Positions 92, 308, and 347 each coordinate Mn(2+).

The protein belongs to the PP2C family. In terms of assembly, monomer. The cofactor is Mg(2+). It depends on Mn(2+) as a cofactor.

The protein localises to the vacuole membrane. It carries out the reaction O-phospho-L-seryl-[protein] + H2O = L-seryl-[protein] + phosphate. The catalysed reaction is O-phospho-L-threonyl-[protein] + H2O = L-threonyl-[protein] + phosphate. Has a role in the regulation of vacuole fusion. This Schizosaccharomyces pombe (strain 972 / ATCC 24843) (Fission yeast) protein is Protein phosphatase 2C homolog 4 (ptc4).